Reading from the N-terminus, the 331-residue chain is 6-phosphogluconolactonase (331 aa).

Residue K287 is modified to N6-acetyllysine.

This sequence belongs to the cycloisomerase 2 family.

The enzyme catalyses 6-phospho-D-glucono-1,5-lactone + H2O = 6-phospho-D-gluconate + H(+). Its pathway is carbohydrate degradation; pentose phosphate pathway; D-ribulose 5-phosphate from D-glucose 6-phosphate (oxidative stage): step 2/3. In terms of biological role, catalyzes the hydrolysis of 6-phosphogluconolactone to 6-phosphogluconate. The protein is 6-phosphogluconolactonase of Escherichia coli O8 (strain IAI1).